Consider the following 549-residue polypeptide: Glucose-6-phosphate isomerase (549 aa).

The Proton donor role is filled by Glu-353. Catalysis depends on residues His-384 and Lys-510.

Belongs to the GPI family.

The protein localises to the cytoplasm. The enzyme catalyses alpha-D-glucose 6-phosphate = beta-D-fructose 6-phosphate. Its pathway is carbohydrate biosynthesis; gluconeogenesis. It functions in the pathway carbohydrate degradation; glycolysis; D-glyceraldehyde 3-phosphate and glycerone phosphate from D-glucose: step 2/4. Functionally, catalyzes the reversible isomerization of glucose-6-phosphate to fructose-6-phosphate. This is Glucose-6-phosphate isomerase from Mycolicibacterium smegmatis (Mycobacterium smegmatis).